The primary structure comprises 362 residues: Patr class I histocompatibility antigen, A-5 alpha chain (362 aa).

The first 24 residues, methionine 1–alanine 24, serve as a signal peptide directing secretion. Residues glycine 25–alanine 114 form an alpha-1 region. At glycine 25 to isoleucine 308 the chain is on the extracellular side. Asparagine 110 is a glycosylation site (N-linked (GlcNAc...) asparagine). Residues glycine 115–alanine 206 form an alpha-2 region. Disulfide bonds link cysteine 125–cysteine 188 and cysteine 227–cysteine 283. An alpha-3 region spans residues aspartate 207–tryptophan 298. The 87-residue stretch at proline 209–threonine 295 folds into the Ig-like C1-type domain. The interval glutamate 299 to isoleucine 308 is connecting peptide. A helical membrane pass occupies residues valine 309 to cysteine 332. The Cytoplasmic segment spans residues arginine 333–alanine 362. Residues serine 336–alanine 362 form a disordered region. Serine 343 carries the phosphoserine modification. Positions serine 343–alanine 362 are enriched in low complexity. A Phosphotyrosine modification is found at tyrosine 344. Residues serine 345, serine 349, serine 350, serine 352, serine 356, and serine 359 each carry the phosphoserine modification.

This sequence belongs to the MHC class I family. Heterodimer of an alpha chain and a beta chain (beta-2-microglobulin).

The protein localises to the membrane. Involved in the presentation of foreign antigens to the immune system. The polypeptide is Patr class I histocompatibility antigen, A-5 alpha chain (Pan troglodytes (Chimpanzee)).